The sequence spans 427 residues: MDRISNLSDDLLLKIVSSLPTKDVVVTMLLSKRWKFLWMMVPKLRFDDEFELEPSYYGRFLKYVDKSMVLNRAQVLETVKFNVGPCCSSEDIATWIRIGMVRNMRELEISHCEGYFREHRSIKLPKSLYTYEKLEVLKLASTVVLNVPIDVCFPSLKSLHLVCVEYKTKKSHRRLLSGCPVLEELVLDKSYNSFHVRSFYVEIPTLQSLSILDTSGELYGDFTFVVNAPALKYFNFVDFYGDLCLRDNMPEVVDVNIKVIYRNPKKLLGPLKSVKRLSLCLSPSTTLHNHMEFYQLVHLELCGDALMWWDLLTWMLQSSPKLQVLKIYECKCEEHDYLDDPIEEHWEEPSSVPQCLLFHLNIFEWKYYNAGDEEKKVVAYILKNARQLKTATFSAASYLYPKEERSRELNELVYMARASSSCQLLLD.

Residues 1 to 53 (MDRISNLSDDLLLKIVSSLPTKDVVVTMLLSKRWKFLWMMVPKLRFDDEFELE) form the F-box domain. An FBD domain is found at 345–395 (HWEEPSSVPQCLLFHLNIFEWKYYNAGDEEKKVVAYILKNARQLKTATFSA).

The polypeptide is Putative FBD-associated F-box protein At3g50710 (Arabidopsis thaliana (Mouse-ear cress)).